The primary structure comprises 244 residues: DNA repair protein RecO (244 aa).

The protein belongs to the RecO family.

Its function is as follows. Involved in DNA repair and RecF pathway recombination. In Nocardioides sp. (strain ATCC BAA-499 / JS614), this protein is DNA repair protein RecO.